We begin with the raw amino-acid sequence, 402 residues long: MDKYDGSRVFFREMCKNNRDDFPYRRGVIMSELHTPCCPVVCKLILPDPLTIDFISKIQQKPFLCIQFCSVLPCLEILEEFDRRSKNDKSLRRFVDYEGATTLLTFNELFNKYSRIEGNQFVFHVDSDKYLLNEHTSKKIIDLINPSISIIPTLSLKHSERKKWSARKRTKLNDLYQTYYETLSRYPNSTKLVKPIHPCIELKEMGDFEVIEFPGFGFGESLNERYEWIKEMGKNLTGKEVRIIQLKTGTPLEILHAVLMGFDVVISPYPESLSEQGFALSFELPSEFEGNYEPEYVLNLLNERCKFFDGVYKDQIKDIVDLKNSVHIDVVESLMDEKSVRKESRAYINHLLNCKEMNGNIILSSHNLYMYELLFQRIRDSIENDTLVNFVYNFIQLNVKRD.

The protein belongs to the queuine tRNA-ribosyltransferase family.

The polypeptide is Queuine tRNA-ribosyltransferase-like protein (Theileria parva (East coast fever infection agent)).